Reading from the N-terminus, the 628-residue chain is Forkhead box protein O (628 aa).

Position 50 is a phosphothreonine; by PKB/AKT1 (Thr50). A Phosphoserine modification is found at Ser81. Residues 101–207 constitute a DNA-binding region (fork-head); sequence WGNLSYADLI…ETSRYEKRRG (107 aa). 2 disordered regions span residues 188–210 and 223–270; these read KSVR…GRAK and GLND…SSCG. Ser196 carries the post-translational modification Phosphoserine; by PKB/AKT1. 2 stretches are compositionally biased toward polar residues: residues 227 to 236 and 261 to 270; these read ATPSPSSSVS and RASSNASSCG. The residue at position 264 (Ser264) is a Phosphoserine; by PKB/AKT1. 3 positions are modified to phosphoserine: Ser267, Ser268, and Ser273. Disordered regions lie at residues 327–373 and 398–451; these read SAAS…SLQP and NSVT…QQQQ. Pro residues predominate over residues 334–343; it reads TQPPPPPYPA. The segment covering 344-359 has biased composition (low complexity); sequence PQQQQQQQPQQQQAYT. Over residues 411-423 the composition is skewed to polar residues; sequence SEPSSDSLNTYSN. The span at 438-451 shows a compositional bias: low complexity; it reads QQQRQQQQQQQQQQ.

In terms of assembly, interacts with melt.

The protein resides in the cytoplasm. It is found in the nucleus. Its function is as follows. Transcription factor involved in the regulation of the insulin signaling pathway. Consistently activates both the downstream target Thor\d4EBP and the feedback control target InR. Involved in negative regulation of the cell cycle, modulating cell growth and proliferation. In response to cellular stresses, such as nutrient deprivation or increased levels of reactive oxygen species, foxo is activated and inhibits growth through the action of target genes such as Thor. Foxo activated in the adult fat body can regulate lifespan in adults; an insulin peptide itself may function as one secondary messenger of insulin-regulated aging. Also regulates Lip4, homolog of human acid lipases, thereby acting as a key modulator of lipid metabolism by insulin signaling and integrates insulin responses to glucose and lipid homeostasis. The sequence is that of Forkhead box protein O from Drosophila willistoni (Fruit fly).